The primary structure comprises 157 residues: D-aminoacyl-tRNA deacylase (157 aa).

The Gly-cisPro motif, important for rejection of L-amino acids signature appears at 137-138 (GP).

The protein belongs to the DTD family. In terms of assembly, homodimer.

It localises to the cytoplasm. It carries out the reaction glycyl-tRNA(Ala) + H2O = tRNA(Ala) + glycine + H(+). The catalysed reaction is a D-aminoacyl-tRNA + H2O = a tRNA + a D-alpha-amino acid + H(+). Functionally, an aminoacyl-tRNA editing enzyme that deacylates mischarged D-aminoacyl-tRNAs. Also deacylates mischarged glycyl-tRNA(Ala), protecting cells against glycine mischarging by AlaRS. Acts via tRNA-based rather than protein-based catalysis; rejects L-amino acids rather than detecting D-amino acids in the active site. By recycling D-aminoacyl-tRNA to D-amino acids and free tRNA molecules, this enzyme counteracts the toxicity associated with the formation of D-aminoacyl-tRNA entities in vivo and helps enforce protein L-homochirality. This Roseiflexus castenholzii (strain DSM 13941 / HLO8) protein is D-aminoacyl-tRNA deacylase.